Here is a 280-residue protein sequence, read N- to C-terminus: Energy-coupling factor transporter ATP-binding protein EcfA2 (280 aa).

In terms of domain architecture, ABC transporter spans 3–245; that stretch reads INLQNVSYTY…VSLLEKKQLG (243 aa). 40-47 contributes to the ATP binding site; the sequence is GHTGSGKS.

It belongs to the ABC transporter superfamily. Energy-coupling factor EcfA family. In terms of assembly, forms a stable energy-coupling factor (ECF) transporter complex composed of 2 membrane-embedded substrate-binding proteins (S component), 2 ATP-binding proteins (A component) and 2 transmembrane proteins (T component).

It localises to the cell membrane. Its function is as follows. ATP-binding (A) component of a common energy-coupling factor (ECF) ABC-transporter complex. Unlike classic ABC transporters this ECF transporter provides the energy necessary to transport a number of different substrates. In Streptococcus pyogenes serotype M1, this protein is Energy-coupling factor transporter ATP-binding protein EcfA2.